Reading from the N-terminus, the 119-residue chain is Large ribosomal subunit protein bL20 (119 aa).

It belongs to the bacterial ribosomal protein bL20 family.

Functionally, binds directly to 23S ribosomal RNA and is necessary for the in vitro assembly process of the 50S ribosomal subunit. It is not involved in the protein synthesizing functions of that subunit. The protein is Large ribosomal subunit protein bL20 of Halalkalibacterium halodurans (strain ATCC BAA-125 / DSM 18197 / FERM 7344 / JCM 9153 / C-125) (Bacillus halodurans).